The chain runs to 209 residues: GTP cyclohydrolase 1 (209 aa).

The Zn(2+) site is built by cysteine 100, histidine 103, and cysteine 171.

It belongs to the GTP cyclohydrolase I family. As to quaternary structure, toroid-shaped homodecamer, composed of two pentamers of five dimers.

The enzyme catalyses GTP + H2O = 7,8-dihydroneopterin 3'-triphosphate + formate + H(+). Its pathway is cofactor biosynthesis; 7,8-dihydroneopterin triphosphate biosynthesis; 7,8-dihydroneopterin triphosphate from GTP: step 1/1. This chain is GTP cyclohydrolase 1, found in Ralstonia nicotianae (strain ATCC BAA-1114 / GMI1000) (Ralstonia solanacearum).